The chain runs to 844 residues: SWI/SNF-related matrix-associated actin-dependent regulator of chromatin subfamily A containing DEAD/H box 1 homolog (844 aa).

Low complexity predominate over residues 1 to 23 (MSDSTVAASASASASSSAKSSLS). Disordered stretches follow at residues 1-75 (MSDS…TKLE) and 121-180 (NCKP…STKM). A compositionally biased stretch (polar residues) spans 30 to 42 (INKNASSVVASPS). The 171-residue stretch at 301 to 471 (TVMHKQEMNG…ISLLCFVMPK (171 aa)) folds into the Helicase ATP-binding domain. An ATP-binding site is contributed by 314–321 (DEMGLGKT). The DEGH box signature appears at 422 to 425 (DEAH). The Helicase C-terminal domain maps to 656–818 (YLDTLLPKLK…EQRCVVKLLT (163 aa)). Residues serine 834, serine 838, and serine 841 each carry the phosphoserine modification.

The protein belongs to the SNF2/RAD54 helicase family.

Its subcellular location is the nucleus. The catalysed reaction is ATP + H2O = ADP + phosphate + H(+). In terms of biological role, DNA helicase that possesses intrinsic ATP-dependent nucleosome-remodeling activity and is both required for DNA repair and heterochromatin organization. Promotes DNA end resection of double-strand breaks (DSBs) following DNA damage: probably acts by weakening histone DNA interactions in nucleosomes flanking DSBs. This is SWI/SNF-related matrix-associated actin-dependent regulator of chromatin subfamily A containing DEAD/H box 1 homolog (Etl1) from Drosophila melanogaster (Fruit fly).